The sequence spans 23 residues: NADH-ubiquinone oxidoreductase 29 kDa subunit (23 aa).

As to quaternary structure, complex I is composed of about 45 different subunits.

The protein resides in the mitochondrion inner membrane. It carries out the reaction a ubiquinone + NADH + 5 H(+)(in) = a ubiquinol + NAD(+) + 4 H(+)(out). Transfer of electrons from NADH to the respiratory chain. The immediate electron acceptor for the enzyme is believed to be ubiquinone. The chain is NADH-ubiquinone oxidoreductase 29 kDa subunit from Solanum tuberosum (Potato).